Reading from the N-terminus, the 90-residue chain is Aminoacyl carrier protein 1 (90 aa).

One can recognise a Carrier domain in the interval T6–L84. S42 is subject to O-(pantetheine 4'-phosphoryl)serine.

In terms of processing, 4'-phosphopantetheine is transferred from CoA to a specific serine of the apo-form of this carrier protein.

In terms of biological role, aminoacyl carrier protein. Can be charged with L-glycine via the formation of a thioester bond between the amino acid and the 4'-phosphopantetheinyl prosthetic group, catalyzed by the bll0957 ligase. The protein is Aminoacyl carrier protein 1 of Bradyrhizobium diazoefficiens (strain JCM 10833 / BCRC 13528 / IAM 13628 / NBRC 14792 / USDA 110).